Here is a 152-residue protein sequence, read N- to C-terminus: Flagellar assembly factor FliW (152 aa).

The protein belongs to the FliW family. In terms of assembly, interacts with translational regulator CsrA and flagellin(s).

It is found in the cytoplasm. Its function is as follows. Acts as an anti-CsrA protein, binds CsrA and prevents it from repressing translation of its target genes, one of which is flagellin. Binds to flagellin and participates in the assembly of the flagellum. The sequence is that of Flagellar assembly factor FliW from Caldicellulosiruptor saccharolyticus (strain ATCC 43494 / DSM 8903 / Tp8T 6331).